Consider the following 502-residue polypeptide: Histidine--tRNA ligase (502 aa).

This sequence belongs to the class-II aminoacyl-tRNA synthetase family. In terms of assembly, homodimer.

The protein localises to the cytoplasm. The catalysed reaction is tRNA(His) + L-histidine + ATP = L-histidyl-tRNA(His) + AMP + diphosphate + H(+). The chain is Histidine--tRNA ligase (hisS) from Brucella suis biovar 1 (strain 1330).